A 420-amino-acid chain; its full sequence is 4-hydroxy-3-methylbut-2-en-1-yl diphosphate synthase (flavodoxin) (420 aa).

[4Fe-4S] cluster is bound by residues Cys307, Cys310, Cys353, and Glu360.

Belongs to the IspG family. Requires [4Fe-4S] cluster as cofactor.

The enzyme catalyses (2E)-4-hydroxy-3-methylbut-2-enyl diphosphate + oxidized [flavodoxin] + H2O + 2 H(+) = 2-C-methyl-D-erythritol 2,4-cyclic diphosphate + reduced [flavodoxin]. Its pathway is isoprenoid biosynthesis; isopentenyl diphosphate biosynthesis via DXP pathway; isopentenyl diphosphate from 1-deoxy-D-xylulose 5-phosphate: step 5/6. Its function is as follows. Converts 2C-methyl-D-erythritol 2,4-cyclodiphosphate (ME-2,4cPP) into 1-hydroxy-2-methyl-2-(E)-butenyl 4-diphosphate. This Brucella melitensis biotype 2 (strain ATCC 23457) protein is 4-hydroxy-3-methylbut-2-en-1-yl diphosphate synthase (flavodoxin).